The chain runs to 461 residues: Argininosuccinate lyase (461 aa).

It belongs to the lyase 1 family. Argininosuccinate lyase subfamily.

The protein resides in the cytoplasm. The enzyme catalyses 2-(N(omega)-L-arginino)succinate = fumarate + L-arginine. Its pathway is amino-acid biosynthesis; L-arginine biosynthesis; L-arginine from L-ornithine and carbamoyl phosphate: step 3/3. This Nitrosomonas europaea (strain ATCC 19718 / CIP 103999 / KCTC 2705 / NBRC 14298) protein is Argininosuccinate lyase.